We begin with the raw amino-acid sequence, 360 residues long: Squamosa promoter-binding-like protein 7 (360 aa).

Over residues 74-89 the composition is skewed to gly residues; sequence AQGSGGGGGGGGGGSA. Positions 74-98 are disordered; sequence AQGSGGGGGGGGGGSADQGKRKEKA. The segment at 105–182 adopts an SBP-type zinc-finger fold; the sequence is VPRCQVEGCD…AGHNERRRRS (78 aa). Residues Cys-108, Cys-113, Cys-130, His-133, Cys-149, Cys-152, His-156, and Cys-168 each coordinate Zn(2+). Positions 165–181 match the Bipartite nuclear localization signal motif; that stretch reads KKSCRRRLAGHNERRRR. Positions 172-182 are enriched in basic residues; it reads LAGHNERRRRS. Disordered stretches follow at residues 172–196, 261–306, and 320–360; these read LAGHNERRRRSNASEAMARGSAHPH, FFSD…HEHQ, and AAGG…ARVV.

In terms of tissue distribution, expressed in young panicles.

Its subcellular location is the nucleus. Functionally, trans-acting factor that binds specifically to the consensus nucleotide sequence 5'-TNCGTACAA-3'. May be involved in panicle development. The polypeptide is Squamosa promoter-binding-like protein 7 (SPL7) (Oryza sativa subsp. indica (Rice)).